The chain runs to 245 residues: MKLTQFISYAILSLSGVQAATLNGPCTGARGAPGICISTSSCTKAGGSYISNACPGLPIGIKCCSKTSCGDGGNCRFTSACSSGNTQAGLCPGPSSFQCCLPKASGGGKFPPPKIPAVGRCKKTAVDGAKKIVAAHPGMVREIFCIRDCPCPSNSEHCCGLATDMMCTSEAGEYSKLTWHGIVKKRDRDAFGRVMAEWVMNHRKILNLKYVIWGQRIWNPSLDKVSPWTNWRQMEDRGSITQNHW.

Residues 1–19 form the signal peptide; sequence MKLTQFISYAILSLSGVQA.

The protein localises to the secreted. This is an uncharacterized protein from Arthroderma benhamiae (strain ATCC MYA-4681 / CBS 112371) (Trichophyton mentagrophytes).